A 384-amino-acid chain; its full sequence is 4-hydroxy-3-methylbut-2-en-1-yl diphosphate synthase (flavodoxin) (384 aa).

[4Fe-4S] cluster-binding residues include Cys-280, Cys-283, Cys-315, and Glu-322.

This sequence belongs to the IspG family. The cofactor is [4Fe-4S] cluster.

The enzyme catalyses (2E)-4-hydroxy-3-methylbut-2-enyl diphosphate + oxidized [flavodoxin] + H2O + 2 H(+) = 2-C-methyl-D-erythritol 2,4-cyclic diphosphate + reduced [flavodoxin]. It functions in the pathway isoprenoid biosynthesis; isopentenyl diphosphate biosynthesis via DXP pathway; isopentenyl diphosphate from 1-deoxy-D-xylulose 5-phosphate: step 5/6. Functionally, converts 2C-methyl-D-erythritol 2,4-cyclodiphosphate (ME-2,4cPP) into 1-hydroxy-2-methyl-2-(E)-butenyl 4-diphosphate. The protein is 4-hydroxy-3-methylbut-2-en-1-yl diphosphate synthase (flavodoxin) of Parafrankia sp. (strain EAN1pec).